The sequence spans 205 residues: GTP cyclohydrolase-2 (205 aa).

49–53 (RVHSE) is a GTP binding site. Residues C54, C65, and C67 each coordinate Zn(2+). GTP contacts are provided by residues Q70, 92–94 (EGR), and T114. The active-site Proton acceptor is D126. R128 acts as the Nucleophile in catalysis. Positions 149 and 154 each coordinate GTP.

Belongs to the GTP cyclohydrolase II family. Requires Zn(2+) as cofactor.

It carries out the reaction GTP + 4 H2O = 2,5-diamino-6-hydroxy-4-(5-phosphoribosylamino)-pyrimidine + formate + 2 phosphate + 3 H(+). It participates in cofactor biosynthesis; riboflavin biosynthesis; 5-amino-6-(D-ribitylamino)uracil from GTP: step 1/4. Its function is as follows. Catalyzes the conversion of GTP to 2,5-diamino-6-ribosylamino-4(3H)-pyrimidinone 5'-phosphate (DARP), formate and pyrophosphate. The chain is GTP cyclohydrolase-2 from Pseudomonas fluorescens (strain SBW25).